The following is a 469-amino-acid chain: Adenosylhomocysteinase (469 aa).

3 residues coordinate substrate: T58, D133, and E195. An NAD(+)-binding site is contributed by 196-198; sequence TTT. 2 residues coordinate substrate: K225 and D229. Residues N230, 259–264, E282, N317, 338–340, and N383 each bind NAD(+); these read GFGDVG and IGH.

This sequence belongs to the adenosylhomocysteinase family. It depends on NAD(+) as a cofactor.

The protein resides in the cytoplasm. It carries out the reaction S-adenosyl-L-homocysteine + H2O = L-homocysteine + adenosine. It participates in amino-acid biosynthesis; L-homocysteine biosynthesis; L-homocysteine from S-adenosyl-L-homocysteine: step 1/1. In terms of biological role, may play a key role in the regulation of the intracellular concentration of adenosylhomocysteine. This Rhodopseudomonas palustris (strain TIE-1) protein is Adenosylhomocysteinase.